The chain runs to 149 residues: Large ribosomal subunit protein uL13 (149 aa).

The protein belongs to the universal ribosomal protein uL13 family. Part of the 50S ribosomal subunit.

In terms of biological role, this protein is one of the early assembly proteins of the 50S ribosomal subunit, although it is not seen to bind rRNA by itself. It is important during the early stages of 50S assembly. The polypeptide is Large ribosomal subunit protein uL13 (Thermosipho africanus (strain TCF52B)).